Consider the following 102-residue polypeptide: DET1- and DDB1-associated protein 1 (102 aa).

Ala2 bears the N-acetylalanine mark. 2 positions are modified to phosphoserine: Ser33 and Ser95. The tract at residues 67–102 (NAAKKRDQEQVEAEGESSAPPRKVARTDSPDMPEDT) is disordered.

The protein belongs to the DDA1 family. As to quaternary structure, component of numerous DCX (DDB1-CUL4-X-box) E3 ubiquitin-protein ligase complexes which consist of a core of DDB1, cullin-4 (CUL4A or CUL4B), DDA1 and RBX1. Component of the DCX(DCAF15) complex, also named CLR4(DCAF15) complex, composed of DCAF15, DDB1, cullin-4 (CUL4A or CUL4B), DDA1 and RBX1. Part of the DDD core complex containing DET1, DDA1 and DDB1; the DDD core complex recruits a specific UBE2E enzyme, such as UBE2E1, UBE2E2 UBE2E3, to form specific DDD-E2 complexes.

Its pathway is protein modification; protein ubiquitination. In terms of biological role, functions as a component of numerous distinct DCX (DDB1-CUL4-X-box) E3 ubiquitin-protein ligase complexes which mediate the ubiquitination and subsequent proteasomal degradation of target proteins. In the DCX complexes, acts as a scaffolding subunit required to stabilize the complex. In Mus musculus (Mouse), this protein is DET1- and DDB1-associated protein 1.